Here is a 242-residue protein sequence, read N- to C-terminus: MSMLCYTLIIAFLIGIWAAPQSEDNVPLGSPATSDLSDTSCAQTHEDLKTSRNTDQRHPAPKKADDQELGSAANIIVDPKLFQKRQFQSSRVLFSTQPPPLSRDEQSVEFLDNEDALNRNIQAKRQNHPVHDLGEHSVCDSISEWVTKTTATDIKGNTVTVKVDVNLNNHVYKQYFFETKCRNPNPVPSGCRGIDSRLWTSYCTKTQTFVRALTMEGNQASWRFIRIDTACVCVITKKTDNL.

The signal sequence occupies residues 1–18 (MSMLCYTLIIAFLIGIWA). Positions 19-125 (APQSEDNVPL…ALNRNIQAKR (107 aa)) are excised as a propeptide. Residues 47 to 66 (DLKTSRNTDQRHPAPKKADD) are compositionally biased toward basic and acidic residues. Residues 47–70 (DLKTSRNTDQRHPAPKKADDQELG) are disordered. 3 disulfides stabilise this stretch: cysteine 139/cysteine 203, cysteine 181/cysteine 231, and cysteine 191/cysteine 233.

This sequence belongs to the NGF-beta family. In terms of assembly, homodimer; non-covalently linked. As to expression, expressed by the venom gland.

Its subcellular location is the secreted. Nerve growth factor is important for the development and maintenance of the sympathetic and sensory nervous systems. It stimulates division and differentiation of sympathetic and embryonic sensory neurons as well as basal forebrain cholinergic neurons in the brain. Its relevance in the snake venom is not clear. However, it has been shown to inhibit metalloproteinase-dependent proteolysis of platelet glycoprotein Ib alpha, suggesting a metalloproteinase inhibition to prevent metalloprotease autodigestion and/or protection against prey proteases. Binds a lipid between the two protein chains in the homodimer. The lipid-bound form promotes histamine relase from mouse mast cells, contrary to the lipid-free form. The sequence is that of Venom nerve growth factor 2 from Pseudechis australis (Mulga snake).